We begin with the raw amino-acid sequence, 359 residues long: MDNSIVEENGNSSAASGSNDVVDVVAQQAAAAVGGGGGGGGGGGGGNPQQQQQNPQSTTAGGPTGATNNAQGGGVSSVLTTTANCNIQYPIQTLAQHGLQVSIWGPGAWCQLSSVRCYGSQPEVATKDVQSVIQANPSGVIQTAAGTQQQQQALAAATAMQKVVYVAKPPNSTVIHTTPGNAVQVRNKIPPTFPCKIKPEPNTQHPEDSDESLSDDDSQHHRSELTRRPSYNKIFTEISGPDMSGASLPMSDGVLNSQLAGTGAGGNAANSSLMQLDPTYYLSNRMSYNTNNSGIAEDQTRKREIRLQKNREAARECRRKKKEYIKCLENRVAVLENQNKALIEELKSLKELYCQTKND.

2 disordered regions span residues 1–73 (MDNS…AQGG) and 185–238 (VRNK…FTEI). Positions 9–32 (NGNSSAASGSNDVVDVVAQQAAAA) are enriched in low complexity. Positions 33–47 (VGGGGGGGGGGGGGN) are enriched in gly residues. A compositionally biased stretch (low complexity) spans 48–70 (PQQQQQNPQSTTAGGPTGATNNA). A KID domain is found at 198–257 (KPEPNTQHPEDSDESLSDDDSQHHRSELTRRPSYNKIFTEISGPDMSGASLPMSDGVLNS). 3 positions are modified to phosphoserine: Ser209, Ser212, and Ser214. A compositionally biased stretch (basic and acidic residues) spans 217–227 (DSQHHRSELTR). In terms of domain architecture, bZIP spans 300–359 (TRKREIRLQKNREAARECRRKKKEYIKCLENRVAVLENQNKALIEELKSLKELYCQTKND). The interval 301–326 (RKREIRLQKNREAARECRRKKKEYIK) is basic motif. The tract at residues 328-349 (LENRVAVLENQNKALIEELKSL) is leucine-zipper.

Belongs to the bZIP family. ATF subfamily. In terms of assembly, homodimer. In terms of tissue distribution, most cells of the adult brain; cell bodies, but not neuropil.

It is found in the nucleus. Isoform E is a PKA-dependent transcriptional activator. Isoform J is a direct antagonist of activation by isoform E in cell culture. Binds the cAMP response element (CRE) (consensus: 5'-GTGACGT[AC][AG]-3'), a sequence present in many viral and cellular promoters. Has a role in long-term memory. This chain is Cyclic AMP response element-binding protein B, found in Drosophila melanogaster (Fruit fly).